Consider the following 240-residue polypeptide: Small ribosomal subunit protein uS3m (240 aa).

This sequence belongs to the universal ribosomal protein uS3 family.

It is found in the mitochondrion. The chain is Small ribosomal subunit protein uS3m (RPS3) from Chondrus crispus (Carrageen Irish moss).